An 860-amino-acid polypeptide reads, in one-letter code: Leucine--tRNA ligase (860 aa).

The 'HIGH' region signature appears at 42–52 (PYPSGRLHMGH). Residues 619-623 (KMSKS) carry the 'KMSKS' region motif. Lysine 622 is a binding site for ATP.

Belongs to the class-I aminoacyl-tRNA synthetase family.

Its subcellular location is the cytoplasm. The catalysed reaction is tRNA(Leu) + L-leucine + ATP = L-leucyl-tRNA(Leu) + AMP + diphosphate. This Escherichia coli O17:K52:H18 (strain UMN026 / ExPEC) protein is Leucine--tRNA ligase.